The following is a 464-amino-acid chain: NADH-ubiquinone oxidoreductase chain 4 (464 aa).

Transmembrane regions (helical) follow at residues 18 to 38, 54 to 74, 79 to 99, 102 to 122, 131 to 151, 168 to 188, 207 to 227, 239 to 259, 266 to 286, 297 to 317, 332 to 352, 375 to 395, and 420 to 440; these read LLPTYGKGLILVASILVVLPT, IADIFILLTAYLLPLSIIANW, SLLYFELILNLGVILLINFMC, MLSFYVYFEISLAPLFILIGL, AADYILIYTLFSSLFMLLAIG, VVLSTDLQCILFLCISAGIMV, PLAGSMLLAGVILKLAVYAII, VLYTPVVYVICAITIIYTSII, LKVIVAYSSISHMAVCILGIL, LILSLAHGFVSPALFIIVGGI, GLLTYMPILAIYLLILSFSNI, TILGCISAFSVLLSAAYMLKV, and LLMIALIIPTLWYGLYPNGII.

It belongs to the complex I subunit 4 family.

It is found in the mitochondrion membrane. The catalysed reaction is a ubiquinone + NADH + 5 H(+)(in) = a ubiquinol + NAD(+) + 4 H(+)(out). In terms of biological role, core subunit of the mitochondrial membrane respiratory chain NADH dehydrogenase (Complex I) that is believed to belong to the minimal assembly required for catalysis. Complex I functions in the transfer of electrons from NADH to the respiratory chain. The immediate electron acceptor for the enzyme is believed to be ubiquinone. This chain is NADH-ubiquinone oxidoreductase chain 4 (NAD4), found in Candida albicans (strain SC5314 / ATCC MYA-2876) (Yeast).